A 360-amino-acid chain; its full sequence is Alpha-ketoglutarate dependent kainoid synthase (360 aa).

The Fe2OG dioxygenase domain maps to 200–310 (MFFSNRIYPE…RASLISFYEP (111 aa)). Histidine 225, aspartate 227, and histidine 286 together coordinate Fe cation. Arginine 301 provides a ligand contact to 2-oxoglutarate.

The protein belongs to the iron/ascorbate-dependent oxidoreductase family. It depends on Fe(2+) as a cofactor.

The catalysed reaction is prekainate + 2-oxoglutarate + O2 = kainate + succinate + CO2 + H2O. It carries out the reaction prekainate + 2-oxoglutarate + O2 + H(+) = kainate lactone + succinate + CO2 + H2O. Its pathway is secondary metabolite biosynthesis. Its activity is regulated as follows. Inhibited by the iron chelator EDTA. Iron/ascorbate-dependent oxidoreductase: part of the gene cluster that mediates the biosynthesis of kainic acid (KA) and derivatives, natural products with neurochemical activity acting as ionotropic glutamate receptor (iGluR) agonists, thus being neurotoxins. Catalyzes the conversion of prekainic acid to kainic acid and kainic acid lactone. This Digenea simplex (Marine red alga) protein is Alpha-ketoglutarate dependent kainoid synthase.